Here is a 381-residue protein sequence, read N- to C-terminus: Glycerate kinase (381 aa).

Belongs to the glycerate kinase type-1 family.

The enzyme catalyses (R)-glycerate + ATP = (2R)-3-phosphoglycerate + ADP + H(+). The sequence is that of Glycerate kinase (glxK) from Bacillus cereus (strain ATCC 10987 / NRS 248).